We begin with the raw amino-acid sequence, 891 residues long: Targeting protein for Xklp2 homolog (891 aa).

Over residues 42-54 (HENGVPLTFDDKA) the composition is skewed to basic and acidic residues. Disordered regions lie at residues 42–310 (HENG…KSCP), 418–454 (NLRK…SFSG), 472–518 (HTKT…NRHR), 723–746 (CSGV…AEKG), and 789–891 (STKP…SHTS). Positions 108-124 (DDVSSAESETCEMSTDS) are enriched in polar residues. Acidic residues predominate over residues 141–154 (DDEATVQESSDAEE). The segment covering 155–173 (TQTLPSSCVDSSTAEMSTD) has biased composition (polar residues). Over residues 236-246 (PTRKSPRLHSR) the composition is skewed to basic residues. Basic and acidic residues predominate over residues 442-454 (DNRKRTHEESFSG). Positions 791–802 (KPMTDISNFSLN) are enriched in polar residues. Basic and acidic residues-rich tracts occupy residues 803 to 822 (TERR…ERQL) and 831 to 852 (REAE…DSIH).

Belongs to the TPX2 family. Detectable in immature oocytes.

The protein resides in the nucleus. The protein localises to the cytoplasm. Its subcellular location is the cytoskeleton. It localises to the spindle. Functionally, spindle assembly factor. Required for normal assembly of mitotic spindles. The protein is Targeting protein for Xklp2 homolog of Patiria pectinifera (Starfish).